Here is a 229-residue protein sequence, read N- to C-terminus: Galactonate operon transcriptional repressor (229 aa).

An HTH gntR-type domain is found at 1–71; it reads MTLNKTDRIV…RYRGAFVAPR (71 aa). Residues 31–50 constitute a DNA-binding region (H-T-H motif); sequence EAELCEEFATSRNIIREVFR. Positions 146, 150, and 195 each coordinate Zn(2+).

In terms of assembly, homodimer.

With respect to regulation, D-galactonate binds DgoR and induces a conformational change in the protein, which decreases its affinity for DNA and consequently derepresses transcription of the dgoRKADT operon. Functionally, involved in the regulation of D-galactonate metabolism. Represses the expression of the dgoRKADT operon by binding to two closely spaced inverted repeats in the cis-acting element, which overlap with the D-galactonate responsive dgo promoter. Employs a derepression mechanism using D-galactonate as a specific effector molecule. The protein is Galactonate operon transcriptional repressor of Escherichia coli (strain K12).